A 200-amino-acid chain; its full sequence is MKYSVMQLKDFKIKSMDASVRASIREELLSEGFNLSEIELLIHCITNKPDDHSWLNEIIKSRLVPNDKPLWRGVPAETKQVLNQGIDIITFDKVVSASYDKNIALHFASGLEYNTQVIFEFKAPMVFNFQEYAIKALRCKEYNPNFKFPDSHRYRNMELVSDEQEVMIPAGSVFRIADRYEYKKCSTYTIYTLDFEGFNL.

Residue R72 coordinates NAD(+). E165 is a catalytic residue.

It belongs to the Tevenvirinae NAD--protein ADP-ribosyltransferase modA family.

It localises to the virion. The catalysed reaction is L-arginyl-[protein] + NAD(+) = N(omega)-(ADP-D-ribosyl)-L-arginyl-[protein] + nicotinamide + H(+). Its function is as follows. ADP-ribosyltransferase that efficiently ADP-ribosylates both alpha subunits of host RNA polymerase RPOA. The ModA-induced ADP-ribosylation of RPOA alpha subunits inhibits transcription from viral early promoters. The polypeptide is NAD--protein ADP-ribosyltransferase modA (Enterobacteria phage T4 (Bacteriophage T4)).